The chain runs to 434 residues: Glutamyl-tRNA reductase (434 aa).

Residues Thr52–Arg55, Ser115, Glu120–Gln122, and Gln126 each bind substrate. The active-site Nucleophile is Cys53. Residue Gly195–Ile200 coordinates NADP(+).

It belongs to the glutamyl-tRNA reductase family. In terms of assembly, homodimer.

It carries out the reaction (S)-4-amino-5-oxopentanoate + tRNA(Glu) + NADP(+) = L-glutamyl-tRNA(Glu) + NADPH + H(+). The protein operates within porphyrin-containing compound metabolism; protoporphyrin-IX biosynthesis; 5-aminolevulinate from L-glutamyl-tRNA(Glu): step 1/2. Catalyzes the NADPH-dependent reduction of glutamyl-tRNA(Glu) to glutamate 1-semialdehyde (GSA). In Cupriavidus necator (strain ATCC 17699 / DSM 428 / KCTC 22496 / NCIMB 10442 / H16 / Stanier 337) (Ralstonia eutropha), this protein is Glutamyl-tRNA reductase.